The primary structure comprises 507 residues: ATP synthase subunit alpha (507 aa).

170 to 177 (GDRQTGKT) provides a ligand contact to ATP.

It belongs to the ATPase alpha/beta chains family. In terms of assembly, F-type ATPases have 2 components, CF(1) - the catalytic core - and CF(0) - the membrane proton channel. CF(1) has five subunits: alpha(3), beta(3), gamma(1), delta(1), epsilon(1). CF(0) has three main subunits: a(1), b(2) and c(9-12). The alpha and beta chains form an alternating ring which encloses part of the gamma chain. CF(1) is attached to CF(0) by a central stalk formed by the gamma and epsilon chains, while a peripheral stalk is formed by the delta and b chains.

The protein resides in the cell inner membrane. The catalysed reaction is ATP + H2O + 4 H(+)(in) = ADP + phosphate + 5 H(+)(out). Produces ATP from ADP in the presence of a proton gradient across the membrane. The alpha chain is a regulatory subunit. The sequence is that of ATP synthase subunit alpha from Thermosipho africanus (strain TCF52B).